Reading from the N-terminus, the 325-residue chain is Solute-binding protein Bpro_4736 (325 aa).

The N-terminal stretch at 1-27 (MKTRTLKVLKPTLALLLAASFSAGALA) is a signal peptide. Phenylglyoxylate is bound at residue 168–173 (RISPVY).

Belongs to the bacterial solute-binding protein 7 family. In terms of assembly, the complex is comprised of an extracytoplasmic solute-binding protein and a heteromeric permease formed by two transmembrane proteins.

Its subcellular location is the periplasm. In terms of biological role, solute-binding protein that binds phenylglyoxylate (in vitro). Probably part of a tripartite ATP-independent periplasmic (TRAP) transport system that mediates solute transport into the cytoplasm. This chain is Solute-binding protein Bpro_4736, found in Polaromonas sp. (strain JS666 / ATCC BAA-500).